A 567-amino-acid chain; its full sequence is Urease subunit alpha (567 aa).

Positions 134, 136, and 217 each coordinate Ni(2+). Residue Lys217 is modified to N6-carboxylysine. His219 is a substrate binding site. Positions 246 and 272 each coordinate Ni(2+). Catalysis depends on His320, which acts as the Proton donor. Asp360 provides a ligand contact to Ni(2+).

Belongs to the metallo-dependent hydrolases superfamily. Urease alpha subunit family. In terms of assembly, heterotrimer of UreA (gamma), UreB (beta) and UreC (alpha) subunits. Three heterotrimers associate to form the active enzyme. Requires Ni cation as cofactor. In terms of processing, carboxylation allows a single lysine to coordinate two nickel ions.

It localises to the cytoplasm. It catalyses the reaction urea + 2 H2O + H(+) = hydrogencarbonate + 2 NH4(+). The protein operates within nitrogen metabolism; urea degradation; CO(2) and NH(3) from urea (urease route): step 1/1. The protein is Urease subunit alpha of Polynucleobacter asymbioticus (strain DSM 18221 / CIP 109841 / QLW-P1DMWA-1) (Polynucleobacter necessarius subsp. asymbioticus).